The chain runs to 386 residues: Succinate--CoA ligase [ADP-forming] subunit beta (386 aa).

The region spanning 9–244 is the ATP-grasp domain; sequence KEILRSFGVP…LDEEDPAEVE (236 aa). ATP is bound by residues Lys46, 53–55, Glu99, Ala102, and Glu107; that span reads GRG. Mg(2+) contacts are provided by Asn199 and Asp213. Substrate contacts are provided by residues Asn264 and 321–323; that span reads GIM.

The protein belongs to the succinate/malate CoA ligase beta subunit family. As to quaternary structure, heterotetramer of two alpha and two beta subunits. The cofactor is Mg(2+).

It carries out the reaction succinate + ATP + CoA = succinyl-CoA + ADP + phosphate. The catalysed reaction is GTP + succinate + CoA = succinyl-CoA + GDP + phosphate. It functions in the pathway carbohydrate metabolism; tricarboxylic acid cycle; succinate from succinyl-CoA (ligase route): step 1/1. In terms of biological role, succinyl-CoA synthetase functions in the citric acid cycle (TCA), coupling the hydrolysis of succinyl-CoA to the synthesis of either ATP or GTP and thus represents the only step of substrate-level phosphorylation in the TCA. The beta subunit provides nucleotide specificity of the enzyme and binds the substrate succinate, while the binding sites for coenzyme A and phosphate are found in the alpha subunit. In Acidovorax ebreus (strain TPSY) (Diaphorobacter sp. (strain TPSY)), this protein is Succinate--CoA ligase [ADP-forming] subunit beta.